The sequence spans 272 residues: Phosphatidylglycerol--prolipoprotein diacylglyceryl transferase (272 aa).

The next 3 membrane-spanning stretches (helical) occupy residues 19-39, 58-78, and 94-114; these read ISIR…YFLV, LNTV…VVFY, and WHGG…GLIF. Residue Arg141 coordinates a 1,2-diacyl-sn-glycero-3-phospho-(1'-sn-glycerol). Helical transmembrane passes span 207 to 227 and 234 to 254; these read GTIL…IENF and LGFI…MILC.

The protein belongs to the Lgt family.

It localises to the cell inner membrane. It catalyses the reaction L-cysteinyl-[prolipoprotein] + a 1,2-diacyl-sn-glycero-3-phospho-(1'-sn-glycerol) = an S-1,2-diacyl-sn-glyceryl-L-cysteinyl-[prolipoprotein] + sn-glycerol 1-phosphate + H(+). It participates in protein modification; lipoprotein biosynthesis (diacylglyceryl transfer). In terms of biological role, catalyzes the transfer of the diacylglyceryl group from phosphatidylglycerol to the sulfhydryl group of the N-terminal cysteine of a prolipoprotein, the first step in the formation of mature lipoproteins. This chain is Phosphatidylglycerol--prolipoprotein diacylglyceryl transferase, found in Desulfotalea psychrophila (strain LSv54 / DSM 12343).